The primary structure comprises 943 residues: Isoleucine--tRNA ligase (943 aa).

The short motif at 59–69 is the 'HIGH' region element; it reads PYANGQIHLGH. Glu577 provides a ligand contact to L-isoleucyl-5'-AMP. The short motif at 618–622 is the 'KMSKS' region element; the sequence is KMSKS. Residue Lys621 coordinates ATP. The Zn(2+) site is built by Cys906, Cys909, Cys926, and Cys929.

Belongs to the class-I aminoacyl-tRNA synthetase family. IleS type 1 subfamily. As to quaternary structure, monomer. It depends on Zn(2+) as a cofactor.

Its subcellular location is the cytoplasm. The catalysed reaction is tRNA(Ile) + L-isoleucine + ATP = L-isoleucyl-tRNA(Ile) + AMP + diphosphate. Functionally, catalyzes the attachment of isoleucine to tRNA(Ile). As IleRS can inadvertently accommodate and process structurally similar amino acids such as valine, to avoid such errors it has two additional distinct tRNA(Ile)-dependent editing activities. One activity is designated as 'pretransfer' editing and involves the hydrolysis of activated Val-AMP. The other activity is designated 'posttransfer' editing and involves deacylation of mischarged Val-tRNA(Ile). This chain is Isoleucine--tRNA ligase, found in Xanthomonas oryzae pv. oryzae (strain MAFF 311018).